The primary structure comprises 393 residues: MDGPAHQTDTVMSDAAGQQPAPPSQPVAGIDNIPATLSHGGRFIQYNIFGNIFEVTAKYKPPIMPIGKGAYGIVCSALNSETNEHVAIKKIANAFDNKIDAKRTLREIKLLRHMDHENIVAIRDIIPPPQREAFNDVYIAYELMDTDLHQIIRSNQGLSEEHCQYFLYQILRGLKYIHSANVLHRDLKPSNLLLNANCDLKICDFGLARVTSETDFMTEYVVTRWYRAPELLLNSSDYTAAIDVWSVGCIFMELMDRKPLFPGRDHVHQLRLLMELIGTPSEAEMEFLNENAKRYIRQLPLYRRQSFVEKFPHVNPAAIDLVEKMLTFDPRRRITVEDALAHPYLTSLHDISDEPVCMTPFNFDFEQHALTEEQMKELIYREGLAFNPEYQHM.

The interval 1 to 32 is disordered; sequence MDGPAHQTDTVMSDAAGQQPAPPSQPVAGIDN. One can recognise a Protein kinase domain in the interval 60–345; it reads KPPIMPIGKG…VEDALAHPYL (286 aa). Residues 66–74 and lysine 89 each bind ATP; that span reads IGKGAYGIV. Residue aspartate 186 is the Proton acceptor of the active site. A Phosphothreonine modification is found at threonine 218. The TXY motif lies at 218–220; it reads TEY. Position 220 is a phosphotyrosine (tyrosine 220).

Belongs to the protein kinase superfamily. CMGC Ser/Thr protein kinase family. MAP kinase subfamily. It depends on Mg(2+) as a cofactor. In terms of processing, dually phosphorylated on Thr-218 and Tyr-220, which activates the enzyme. Very low autophosphorylation, although dramatically increased when Mn(2+) is added to the reaction instead of Mg(2+).

It carries out the reaction L-seryl-[protein] + ATP = O-phospho-L-seryl-[protein] + ADP + H(+). The enzyme catalyses L-threonyl-[protein] + ATP = O-phospho-L-threonyl-[protein] + ADP + H(+). With respect to regulation, activated by tyrosine and threonine phosphorylation. This is Mitogen-activated protein kinase homolog NTF4 (NTF4) from Nicotiana tabacum (Common tobacco).